A 295-amino-acid polypeptide reads, in one-letter code: CCAAT-binding factor complex subunit php4 (295 aa).

Residues 1–19 (MESSKSPSEVEKSSSASPA) are compositionally biased toward low complexity. The segment at 1 to 69 (MESSKSPSEV…GPTSALSVEE (69 aa)) is disordered. A coiled-coil region spans residues 73-111 (RVREKQYQDTIGKLQKENNELLEQLEMLQAQLKNSTLDS). The Nuclear export signal motif lies at 93–100 (LLEQLEML). A disordered region spans residues 108-130 (TLDSPKEVEVNSEVVKPDSATTE).

As to quaternary structure, component of tha CCAAT-binding complex composed of at least php2, php3, php4 and php5. Interacts with crm1 and grx4.

It is found in the cytoplasm. Its subcellular location is the nucleus. The protein localises to the cytoskeleton. It localises to the spindle pole. Its function is as follows. Component of the transcription regulatory CCAAT-binding complex. Required for the reprogramming of the cell for iron use. Down-regulates pcl1, sdh4, and isa1 underlow-iron conditions. The chain is CCAAT-binding factor complex subunit php4 (php4) from Schizosaccharomyces pombe (strain 972 / ATCC 24843) (Fission yeast).